The following is a 138-amino-acid chain: Cellular retinoic acid-binding protein 2 (138 aa).

A Nuclear localization signal motif is present at residues 21-31; that stretch reads KVLGVNVMLRK. Lys102 is covalently cross-linked (Glycyl lysine isopeptide (Lys-Gly) (interchain with G-Cter in SUMO)). Residue 133 to 135 participates in all-trans-retinoate binding; the sequence is RVY.

This sequence belongs to the calycin superfamily. Fatty-acid binding protein (FABP) family. Interacts with RXR and RARA. Interacts with importin alpha. In terms of processing, sumoylated in response to retinoic acid binding, sumoylation is critical for dissociation from ER and subsequent nuclear translocation.

It is found in the cytoplasm. The protein localises to the endoplasmic reticulum. Its subcellular location is the nucleus. Functionally, transports retinoic acid to the nucleus. Regulates the access of retinoic acid to the nuclear retinoic acid receptors. The chain is Cellular retinoic acid-binding protein 2 (CRABP2) from Homo sapiens (Human).